A 338-amino-acid chain; its full sequence is Glycerol-3-phosphate dehydrogenase [NAD(P)+] (338 aa).

Ser13, Trp14, and Lys108 together coordinate NADPH. Residues Lys108, Gly139, and Ser141 each coordinate sn-glycerol 3-phosphate. Ala143 is an NADPH binding site. Residues Lys194, Asp247, Ser257, Arg258, and Asn259 each coordinate sn-glycerol 3-phosphate. Lys194 functions as the Proton acceptor in the catalytic mechanism. Arg258 lines the NADPH pocket. NADPH contacts are provided by Val282 and Glu284.

Belongs to the NAD-dependent glycerol-3-phosphate dehydrogenase family.

Its subcellular location is the cytoplasm. The catalysed reaction is sn-glycerol 3-phosphate + NAD(+) = dihydroxyacetone phosphate + NADH + H(+). The enzyme catalyses sn-glycerol 3-phosphate + NADP(+) = dihydroxyacetone phosphate + NADPH + H(+). Its pathway is membrane lipid metabolism; glycerophospholipid metabolism. In terms of biological role, catalyzes the reduction of the glycolytic intermediate dihydroxyacetone phosphate (DHAP) to sn-glycerol 3-phosphate (G3P), the key precursor for phospholipid synthesis. This Streptococcus uberis (strain ATCC BAA-854 / 0140J) protein is Glycerol-3-phosphate dehydrogenase [NAD(P)+].